Consider the following 322-residue polypeptide: Coelomocyte uptake defective protein 15 (322 aa).

An N-terminal signal peptide occupies residues 1-20 (MVNSLSRILFCSLLIFSVIS). N-linked (GlcNAc...) asparagine glycans are attached at residues asparagine 62, asparagine 98, asparagine 144, asparagine 170, asparagine 180, asparagine 183, and asparagine 222. The chain crosses the membrane as a helical span at residues 244-264 (LFGIMITFGTLLLLTALFYAA).

The protein belongs to the OSTM1 family.

The protein resides in the membrane. Its function is as follows. Modulates the transport of substances from the endosomal to lysosomal compartments. Plays a role in lysosome formation and function in coelomocytes. The sequence is that of Coelomocyte uptake defective protein 15 from Caenorhabditis elegans.